The primary structure comprises 474 residues: L-arabinose isomerase (474 aa).

Positions 306, 331, 348, and 447 each coordinate Mn(2+).

It belongs to the arabinose isomerase family. The cofactor is Mn(2+).

The enzyme catalyses beta-L-arabinopyranose = L-ribulose. The protein operates within carbohydrate degradation; L-arabinose degradation via L-ribulose; D-xylulose 5-phosphate from L-arabinose (bacterial route): step 1/3. Catalyzes the conversion of L-arabinose to L-ribulose. The chain is L-arabinose isomerase from Lactiplantibacillus plantarum (strain ATCC BAA-793 / NCIMB 8826 / WCFS1) (Lactobacillus plantarum).